A 158-amino-acid polypeptide reads, in one-letter code: Endoribonuclease YbeY (158 aa).

Zn(2+) contacts are provided by H119, H123, and D129.

This sequence belongs to the endoribonuclease YbeY family. Zn(2+) is required as a cofactor.

Its subcellular location is the cytoplasm. Its function is as follows. Single strand-specific metallo-endoribonuclease involved in late-stage 70S ribosome quality control and in maturation of the 3' terminus of the 16S rRNA. This Chlamydia caviae (strain ATCC VR-813 / DSM 19441 / 03DC25 / GPIC) (Chlamydophila caviae) protein is Endoribonuclease YbeY.